Here is a 257-residue protein sequence, read N- to C-terminus: uncharacterized protein (257 aa).

7 N-linked (GlcNAc...) asparagine; by host glycosylation sites follow: N61, N95, N102, N111, N139, N148, and N152. The chain crosses the membrane as a helical span at residues 233–253 (WYIIGGIFWVIVLIILVIFII).

Its subcellular location is the host membrane. It is found in the virion. This is an uncharacterized protein from Acanthamoeba polyphaga (Amoeba).